The primary structure comprises 570 residues: Chaperonin GroEL 1 (570 aa).

ATP contacts are provided by residues 42 to 45, Lys-63, 99 to 103, Gly-427, and Asp-507; these read TLGP and DGTTT. A disordered region spans residues 537–570; the sequence is EDEDDDDGGGGGGGGMPAGGAGGMGGMGGMGGMM. Residues 545 to 570 are compositionally biased toward gly residues; that stretch reads GGGGGGGMPAGGAGGMGGMGGMGGMM.

It belongs to the chaperonin (HSP60) family. Forms a cylinder of 14 subunits composed of two heptameric rings stacked back-to-back. Interacts with the co-chaperonin GroES.

It localises to the cytoplasm. The catalysed reaction is ATP + H2O + a folded polypeptide = ADP + phosphate + an unfolded polypeptide.. In terms of biological role, together with its co-chaperonin GroES, plays an essential role in assisting protein folding. The GroEL-GroES system forms a nano-cage that allows encapsulation of the non-native substrate proteins and provides a physical environment optimized to promote and accelerate protein folding. The chain is Chaperonin GroEL 1 from Salinibacter ruber (strain DSM 13855 / M31).